The chain runs to 2542 residues: Highly reducing polyketide synthase (2542 aa).

In terms of domain architecture, Ketosynthase family 3 (KS3) spans 7–435; the sequence is PEPIAIVGMA…GANAHAILDA (429 aa). Catalysis depends on for beta-ketoacyl synthase activity residues C182, H317, and H357. The 328-residue stretch at 545-872 folds into the Malonyl-CoA:ACP transacylase (MAT) domain; it reads FVFTGQGAQW…NLVGSLFLSG (328 aa). Residues 927-1062 are N-terminal hotdog fold; it reads HDLLGSRIPG…TTNETLRINS (136 aa). Residues 927–1224 enclose the PKS/mFAS DH domain; the sequence is HDLLGSRIPG…FLSLETATKE (298 aa). Residue H959 is the Proton acceptor; for dehydratase activity of the active site. Residues 1072–1224 are C-terminal hotdog fold; that stretch reads NKDSYVRRWY…FLSLETATKE (153 aa). The active-site Proton donor; for dehydratase activity is the D1137. The segment at 1275–1574 is methyltransferase (CMet) domain; it reads LTQLAIRSVV…AGADIMLDDY (300 aa). Residues 1606–1634 are disordered; that stretch reads VNGTNGINSTNSVNVTNDTSGINDTNRMN. The Enoyl reductase (ER) domain occupies 1866–2186; that stretch reads GKANSFYFES…QGDSVGSVVL (321 aa). The Ketoreductase (KR) domain occupies 2209-2389; sequence ASYLLVGCLG…QAMSMALGMI (181 aa).

The cofactor is pantetheine 4'-phosphate.

It functions in the pathway antifungal biosynthesis. In terms of biological role, highly reducing polyketide synthase; part of the gene cluster that mediates the biosynthesis of the tetrahydropyranyl antifungal agent lanomycin that acts as an inhibitor of CYP51 and blocks the ergosterol biosynthesis. The biosynthesis probably begins with the formation of an hexaketide, followed by methionine mediated alkylation of C-2 and C-6, and methylation of the reduced C-3 oxygen, pyran forming reductive ring closure, oxygenation of C-4, beta-keto reduction, enoyl reduction and dehydration of the remaining oxygens, and finally, acylation with glycine to complete the biosynthesis. The protein is Highly reducing polyketide synthase of Pyrenophora dematioidea (Helminthosporium dematioideum).